The primary structure comprises 428 residues: Probable glucose-6-phosphate isomerase (428 aa).

The Proton donor role is filled by glutamate 269. Residues histidine 290 and lysine 401 contribute to the active site.

Belongs to the GPI family.

It is found in the cytoplasm. It carries out the reaction alpha-D-glucose 6-phosphate = beta-D-fructose 6-phosphate. It participates in carbohydrate biosynthesis; gluconeogenesis. It functions in the pathway carbohydrate degradation; glycolysis; D-glyceraldehyde 3-phosphate and glycerone phosphate from D-glucose: step 2/4. Its function is as follows. Catalyzes the reversible isomerization of glucose-6-phosphate to fructose-6-phosphate. This Natronomonas pharaonis (strain ATCC 35678 / DSM 2160 / CIP 103997 / JCM 8858 / NBRC 14720 / NCIMB 2260 / Gabara) (Halobacterium pharaonis) protein is Probable glucose-6-phosphate isomerase.